Reading from the N-terminus, the 348-residue chain is Fructose-1,6-bisphosphatase class 1 (348 aa).

Residues glutamate 92, aspartate 111, leucine 113, and aspartate 114 each coordinate Mg(2+). Substrate-binding positions include 114–117 (DGSS) and asparagine 204. Glutamate 276 contacts Mg(2+).

This sequence belongs to the FBPase class 1 family. In terms of assembly, homotetramer. Requires Mg(2+) as cofactor.

Its subcellular location is the cytoplasm. It catalyses the reaction beta-D-fructose 1,6-bisphosphate + H2O = beta-D-fructose 6-phosphate + phosphate. The protein operates within carbohydrate biosynthesis; gluconeogenesis. The protein is Fructose-1,6-bisphosphatase class 1 of Methylorubrum populi (strain ATCC BAA-705 / NCIMB 13946 / BJ001) (Methylobacterium populi).